The primary structure comprises 565 residues: Pentatricopeptide repeat-containing protein At3g20730 (565 aa).

14 PPR repeats span residues 12–46 (SPSL…GFCS), 47–77 (NLQL…ISKR), 78–112 (DVVS…DVKA), 113–147 (NQFT…NCAG), 148–178 (NLIV…MKER), 179–213 (DLVS…GKKP), 214–248 (DCFT…GFGR), 249–279 (SSAL…TKKR), 280–315 (DLLS…KTKM), 316–351 (DEVV…QIRF), 352–382 (DVAL…MKEK), 383–417 (DVRS…RIKP), 418–448 (NDVT…MINK), and 454–484 (REEH…KEGI). A type E motif; degenerate region spans residues 491–565 (TWGAFLDACR…NKAPGYSLVY (75 aa)).

Belongs to the PPR family. PCMP-E subfamily.

In Arabidopsis thaliana (Mouse-ear cress), this protein is Pentatricopeptide repeat-containing protein At3g20730 (PCMP-E94).